A 172-amino-acid chain; its full sequence is Adenine phosphoribosyltransferase (172 aa).

The protein belongs to the purine/pyrimidine phosphoribosyltransferase family. In terms of assembly, homodimer.

Its subcellular location is the cytoplasm. It catalyses the reaction AMP + diphosphate = 5-phospho-alpha-D-ribose 1-diphosphate + adenine. It participates in purine metabolism; AMP biosynthesis via salvage pathway; AMP from adenine: step 1/1. In terms of biological role, catalyzes a salvage reaction resulting in the formation of AMP, that is energically less costly than de novo synthesis. This Staphylococcus carnosus (strain TM300) protein is Adenine phosphoribosyltransferase.